The following is a 259-amino-acid chain: Phosphatidylserine decarboxylase proenzyme (259 aa).

The Schiff-base intermediate with substrate; via pyruvic acid role is filled by serine 183. Serine 183 carries the pyruvic acid (Ser); by autocatalysis modification.

It belongs to the phosphatidylserine decarboxylase family. PSD-A subfamily. As to quaternary structure, heterodimer of a large membrane-associated beta subunit and a small pyruvoyl-containing alpha subunit. It depends on pyruvate as a cofactor. Post-translationally, is synthesized initially as an inactive proenzyme. Formation of the active enzyme involves a self-maturation process in which the active site pyruvoyl group is generated from an internal serine residue via an autocatalytic post-translational modification. Two non-identical subunits are generated from the proenzyme in this reaction, and the pyruvate is formed at the N-terminus of the alpha chain, which is derived from the carboxyl end of the proenzyme. The post-translation cleavage follows an unusual pathway, termed non-hydrolytic serinolysis, in which the side chain hydroxyl group of the serine supplies its oxygen atom to form the C-terminus of the beta chain, while the remainder of the serine residue undergoes an oxidative deamination to produce ammonia and the pyruvoyl prosthetic group on the alpha chain.

Its subcellular location is the cell membrane. The enzyme catalyses a 1,2-diacyl-sn-glycero-3-phospho-L-serine + H(+) = a 1,2-diacyl-sn-glycero-3-phosphoethanolamine + CO2. It functions in the pathway phospholipid metabolism; phosphatidylethanolamine biosynthesis; phosphatidylethanolamine from CDP-diacylglycerol: step 2/2. Its function is as follows. Catalyzes the formation of phosphatidylethanolamine (PtdEtn) from phosphatidylserine (PtdSer). The polypeptide is Phosphatidylserine decarboxylase proenzyme (Neisseria gonorrhoeae (strain ATCC 700825 / FA 1090)).